The following is a 355-amino-acid chain: UPF0421 protein BCE_2776 (355 aa).

4 consecutive transmembrane segments (helical) span residues 19–39 (IAVFLTVLVCEFFNIPTIFAV), 74–94 (FTFFLGHQALSYALAAMFTIV), 109–129 (TLTAVAMIPITADHYFTAFLI), and 131–151 (LATTSTGIIVSTLVNFFILPP).

Belongs to the UPF0421 family.

It is found in the cell membrane. The protein is UPF0421 protein BCE_2776 of Bacillus cereus (strain ATCC 10987 / NRS 248).